Reading from the N-terminus, the 302-residue chain is Pyridoxal 5'-phosphate synthase subunit PdxS (302 aa).

D-ribose 5-phosphate is bound at residue aspartate 32. Lysine 89 functions as the Schiff-base intermediate with D-ribose 5-phosphate in the catalytic mechanism. Glycine 161 lines the D-ribose 5-phosphate pocket. Arginine 173 lines the D-glyceraldehyde 3-phosphate pocket. D-ribose 5-phosphate is bound by residues glycine 222 and 243–244 (GS). The interval 276–302 (ASNPGKGMKGEANADLSEGEKLQTRGV) is disordered. Residues 293–302 (EGEKLQTRGV) show a composition bias toward basic and acidic residues.

The protein belongs to the PdxS/SNZ family. As to quaternary structure, in the presence of PdxT, forms a dodecamer of heterodimers.

It carries out the reaction aldehydo-D-ribose 5-phosphate + D-glyceraldehyde 3-phosphate + L-glutamine = pyridoxal 5'-phosphate + L-glutamate + phosphate + 3 H2O + H(+). The protein operates within cofactor biosynthesis; pyridoxal 5'-phosphate biosynthesis. Its function is as follows. Catalyzes the formation of pyridoxal 5'-phosphate from ribose 5-phosphate (RBP), glyceraldehyde 3-phosphate (G3P) and ammonia. The ammonia is provided by the PdxT subunit. Can also use ribulose 5-phosphate and dihydroxyacetone phosphate as substrates, resulting from enzyme-catalyzed isomerization of RBP and G3P, respectively. This is Pyridoxal 5'-phosphate synthase subunit PdxS from Haloquadratum walsbyi (strain DSM 16790 / HBSQ001).